We begin with the raw amino-acid sequence, 202 residues long: Probable thymidylate kinase (202 aa).

ATP is bound at residue 13–20 (GIDGSGKT).

Belongs to the thymidylate kinase family.

It carries out the reaction dTMP + ATP = dTDP + ADP. This Picrophilus torridus (strain ATCC 700027 / DSM 9790 / JCM 10055 / NBRC 100828 / KAW 2/3) protein is Probable thymidylate kinase.